A 243-amino-acid chain; its full sequence is NAD-dependent protein deacylase (243 aa).

Residues 1 to 234 (MYQHIVVLTG…PKLVDTILAG (234 aa)) enclose the Deacetylase sirtuin-type domain. Residue 10-29 (GAGISAESGLRTFRDQDGLW) coordinates NAD(+). Tyr54 and Arg57 together coordinate substrate. 91–94 (QNID) is a binding site for NAD(+). His109 acts as the Proton acceptor in catalysis. Zn(2+)-binding residues include Cys117 and Cys136. Residues 176–178 (GTS), 202–204 (NLQ), and Ala220 contribute to the NAD(+) site.

Belongs to the sirtuin family. Class III subfamily. It depends on Zn(2+) as a cofactor.

Its subcellular location is the cytoplasm. The enzyme catalyses N(6)-acetyl-L-lysyl-[protein] + NAD(+) + H2O = 2''-O-acetyl-ADP-D-ribose + nicotinamide + L-lysyl-[protein]. The catalysed reaction is N(6)-succinyl-L-lysyl-[protein] + NAD(+) + H2O = 2''-O-succinyl-ADP-D-ribose + nicotinamide + L-lysyl-[protein]. Its function is as follows. NAD-dependent lysine deacetylase and desuccinylase that specifically removes acetyl and succinyl groups on target proteins. Modulates the activities of several proteins which are inactive in their acylated form. This Shewanella oneidensis (strain ATCC 700550 / JCM 31522 / CIP 106686 / LMG 19005 / NCIMB 14063 / MR-1) protein is NAD-dependent protein deacylase.